We begin with the raw amino-acid sequence, 447 residues long: Trigger factor (447 aa).

The PPIase FKBP-type domain occupies 164-249; it reads GNQVTFDFEG…VKLVEKSKLP (86 aa).

This sequence belongs to the FKBP-type PPIase family. Tig subfamily.

It localises to the cytoplasm. It catalyses the reaction [protein]-peptidylproline (omega=180) = [protein]-peptidylproline (omega=0). Its function is as follows. Involved in protein export. Acts as a chaperone by maintaining the newly synthesized protein in an open conformation. Functions as a peptidyl-prolyl cis-trans isomerase. This chain is Trigger factor, found in Psychrobacter arcticus (strain DSM 17307 / VKM B-2377 / 273-4).